The sequence spans 439 residues: Mitochondrial distribution and morphology protein 10 (439 aa).

The tract at residues 275 to 305 is disordered; sequence LPDATPPSFQVPSSSSSSSNPVSPSTSQPPT. Positions 280 to 305 are enriched in low complexity; the sequence is PPSFQVPSSSSSSSNPVSPSTSQPPT.

Belongs to the MDM10 family. Component of the ER-mitochondria encounter structure (ERMES) or MDM complex, composed of MMM1, MDM10, MDM12 and MDM34. Associates with the mitochondrial outer membrane sorting assembly machinery SAM(core) complex.

The protein localises to the mitochondrion outer membrane. Component of the ERMES/MDM complex, which serves as a molecular tether to connect the endoplasmic reticulum and mitochondria. Components of this complex are involved in the control of mitochondrial shape and protein biogenesis and may function in phospholipid exchange. MDM10 is involved in the late assembly steps of the general translocase of the mitochondrial outer membrane (TOM complex). Functions in the TOM40-specific route of the assembly of outer membrane beta-barrel proteins, including the association of TOM40 with the receptor TOM22 and small TOM proteins. Can associate with the SAM(core) complex as well as the MDM12-MMM1 complex, both involved in late steps of the major beta-barrel assembly pathway, that is responsible for biogenesis of all outer membrane beta-barrel proteins. May act as a switch that shuttles between both complexes and channels precursor proteins into the TOM40-specific pathway. Plays a role in mitochondrial morphology and in the inheritance of mitochondria. The polypeptide is Mitochondrial distribution and morphology protein 10 (Laccaria bicolor (strain S238N-H82 / ATCC MYA-4686) (Bicoloured deceiver)).